A 163-amino-acid polypeptide reads, in one-letter code: Probable chemoreceptor glutamine deamidase CheD (163 aa).

It belongs to the CheD family.

It catalyses the reaction L-glutaminyl-[protein] + H2O = L-glutamyl-[protein] + NH4(+). Its function is as follows. Probably deamidates glutamine residues to glutamate on methyl-accepting chemotaxis receptors (MCPs), playing an important role in chemotaxis. The polypeptide is Probable chemoreceptor glutamine deamidase CheD (Pyrococcus abyssi (strain GE5 / Orsay)).